A 555-amino-acid polypeptide reads, in one-letter code: Disabled homolog 1 (555 aa).

Positions 1-26 (MSTETELQVAVKTSAKKDSRKKGQDR) are disordered. Residues 15–26 (AKKDSRKKGQDR) are compositionally biased toward basic and acidic residues. Residues 36 to 189 (KGEGVRYKAK…CEQAVYQTIL (154 aa)) form the PID domain. Y198, Y220, and Y232 each carry phosphotyrosine. Disordered regions lie at residues 386–409 (PLAT…PRQK) and 469–555 (LTPV…QDGS). Residues 391-403 (PGTNDSARSSPQS) are compositionally biased toward polar residues. Composition is skewed to low complexity over residues 470 to 479 (TPVTSTTPST) and 490 to 501 (SSPSKSSASHVS). S491 bears the Phosphoserine; by CDK5 mark. Residues 504-513 (TADDIFEEGF) are compositionally biased toward acidic residues.

As to quaternary structure, associates with the SH2 domains of SRC, FYN and ABL. Interacts (phosphorylated on tyrosine residues) with CRK and CRKL (via respective SH2 domain). Interacts with SIAH1, LRP8 and VLDLR. Interacts with LRP1. Interacts with APLP1 (via NPXY motif). Interacts with DAB2IP. Interacts with ZSWIM8. Phosphorylated by FYN on Tyr-198 and Tyr-220 upon reelin induction in embryonic neurons. Also phosphorylated on Ser-491 independently of reelin signaling. Post-translationally, ubiquitinated by various cullin-5-RING E3 ubiquitin-protein ligase complexes (ECS complexes) following ligand-binding and phosphorylation, leading to its degradation. Ubiquitinated by the ECS(SOCS7) complex in the cortical plate of the developing cerebral cortex following ligand-binding and phosphorylation by FYN, leading to its degradation by the proteasome. Recognized by ZSWIM8 through a disorder targets misorder mechanism that eliminates misfolded DAB1 via ubiquitination and proteasomal degradation.

It localises to the cytoplasm. Signaling adapter of the reelin-mediated signaling pathway, which regulates the migration and differentiation of postmitotic neurons during brain development. Mediates intracellular transduction of Reelin signaling following reelin (RELN)-binding to its receptor: acts by docking proteins through its phosphotyrosine residues and PID domain. The sequence is that of Disabled homolog 1 (Dab1) from Rattus norvegicus (Rat).